We begin with the raw amino-acid sequence, 42 residues long: F420-non-reducing hydrogenase vhu subunit U (42 aa).

Residues Sec21 and Cys24 each contribute to the Ni(2+) site. A non-standard amino acid (selenocysteine) is located at residue Sec21. Positions 28-42 (VLDRVKFRIERKDED) are cleaved as a propeptide — removed in mature form.

The protein belongs to the [NiFe]/[NiFeSe] hydrogenase large subunit family. In terms of assembly, the F420-non-reducing hydrogenase vhu is composed of four subunits; VhuA, VhuD, VhuG and VhuU. Requires Ni(2+) as cofactor.

The polypeptide is F420-non-reducing hydrogenase vhu subunit U (vhuU) (Methanopyrus kandleri (strain AV19 / DSM 6324 / JCM 9639 / NBRC 100938)).